The sequence spans 351 residues: Ion-translocating oxidoreductase complex subunit D (351 aa).

Transmembrane regions (helical) follow at residues 37–57 (YFFG…AILA), 88–108 (AIPP…AIVI), and 123–143 (PAMA…TTWL). An FMN phosphoryl threonine modification is found at threonine 187. 4 consecutive transmembrane segments (helical) span residues 214–234 (FAGL…LFLL), 241–261 (WHIP…FAVF), 270–290 (IFNL…TDPV), and 300–317 (LYYG…RSWG).

It belongs to the NqrB/RnfD family. As to quaternary structure, the complex is composed of six subunits: RnfA, RnfB, RnfC, RnfD, RnfE and RnfG. FMN serves as cofactor.

Its subcellular location is the cell inner membrane. Its function is as follows. Part of a membrane-bound complex that couples electron transfer with translocation of ions across the membrane. In Aliivibrio salmonicida (strain LFI1238) (Vibrio salmonicida (strain LFI1238)), this protein is Ion-translocating oxidoreductase complex subunit D.